The sequence spans 342 residues: Nuclear distribution protein nudE homolog 1 (342 aa).

Residues 45–189 (REYEAELETQ…ELAVQQKQEK (145 aa)) adopt a coiled-coil conformation. An interaction with PAFAH1B1 region spans residues 89 to 157 (EWYRQVSALE…ERNAFLESEL (69 aa)). Disordered stretches follow at residues 182–203 (AVQQ…TERT) and 320–342 (GTRP…KMLL). Polar residues predominate over residues 322-342 (RPSSTPGPMSHPSQSVVKMLL).

This sequence belongs to the nudE family. In terms of assembly, self-associates. Interacts with PAFAH1B1. Phosphorylated in mitosis.

It localises to the cytoplasm. It is found in the cytoskeleton. The protein resides in the microtubule organizing center. The protein localises to the centrosome. Its subcellular location is the spindle. It localises to the chromosome. It is found in the centromere. The protein resides in the kinetochore. The protein localises to the cleavage furrow. Its subcellular location is the cytoplasmic vesicle membrane. In terms of biological role, required for centrosome duplication and formation and function of the mitotic spindle. In Gallus gallus (Chicken), this protein is Nuclear distribution protein nudE homolog 1 (NDE1).